Consider the following 531-residue polypeptide: tRNA-2-methylthio-N(6)-dimethylallyladenosine synthase (531 aa).

Positions 1–26 (MNEKQRLEQTGQIKTESHPADRKSAL) are disordered. The span at 15–26 (TESHPADRKSAL) shows a compositional bias: basic and acidic residues. The region spanning 80 to 198 (RKFYIRTYGC…LPYILHEAYM (119 aa)) is the MTTase N-terminal domain. Positions 89, 125, 159, 235, 239, and 242 each coordinate [4Fe-4S] cluster. The region spanning 221–451 (RKGKIKAWVN…NDLVQEIAAK (231 aa)) is the Radical SAM core domain. Residues 454-517 (KQYEGQVVEV…TWTLTGELVN (64 aa)) enclose the TRAM domain.

It belongs to the methylthiotransferase family. MiaB subfamily. As to quaternary structure, monomer. [4Fe-4S] cluster serves as cofactor.

The protein localises to the cytoplasm. It catalyses the reaction N(6)-dimethylallyladenosine(37) in tRNA + (sulfur carrier)-SH + AH2 + 2 S-adenosyl-L-methionine = 2-methylsulfanyl-N(6)-dimethylallyladenosine(37) in tRNA + (sulfur carrier)-H + 5'-deoxyadenosine + L-methionine + A + S-adenosyl-L-homocysteine + 2 H(+). Catalyzes the methylthiolation of N6-(dimethylallyl)adenosine (i(6)A), leading to the formation of 2-methylthio-N6-(dimethylallyl)adenosine (ms(2)i(6)A) at position 37 in tRNAs that read codons beginning with uridine. The sequence is that of tRNA-2-methylthio-N(6)-dimethylallyladenosine synthase from Geobacillus kaustophilus (strain HTA426).